The sequence spans 215 residues: Putative ribosome biogenesis protein slx9-like (215 aa).

Disordered stretches follow at residues 49-121, 133-157, and 189-215; these read IIPS…GLGM, DSMKLQPKTKGPKLTNEKRKKMSLK, and LQNQKIKQEQDFKPNNNNNNRNKLKRK.

The protein belongs to the SLX9 family.

The protein resides in the nucleus. It localises to the nucleolus. Its function is as follows. Involved in ribosome biogenesis. The chain is Putative ribosome biogenesis protein slx9-like from Dictyostelium discoideum (Social amoeba).